The sequence spans 137 residues: Small ribosomal subunit protein uS12 (137 aa).

Positions 1 to 57 (MPTINQLVRKPRKSKVKKSKSPALNVGYNSRKKVQTNVSSPQKRGVATRVGTMTPKK) are disordered. Basic residues predominate over residues 9-20 (RKPRKSKVKKSK). Asp-102 is modified (3-methylthioaspartic acid).

The protein belongs to the universal ribosomal protein uS12 family. In terms of assembly, part of the 30S ribosomal subunit. Contacts proteins S8 and S17. May interact with IF1 in the 30S initiation complex.

Its function is as follows. With S4 and S5 plays an important role in translational accuracy. Functionally, interacts with and stabilizes bases of the 16S rRNA that are involved in tRNA selection in the A site and with the mRNA backbone. Located at the interface of the 30S and 50S subunits, it traverses the body of the 30S subunit contacting proteins on the other side and probably holding the rRNA structure together. The combined cluster of proteins S8, S12 and S17 appears to hold together the shoulder and platform of the 30S subunit. In Streptococcus suis (strain 05ZYH33), this protein is Small ribosomal subunit protein uS12.